A 441-amino-acid chain; its full sequence is GTPase Der (441 aa).

2 EngA-type G domains span residues 4–169 (PVVA…PDSS) and 178–353 (PRVA…ENNS). Residues 10–17 (GRPNVGKS), 57–61 (DTGGI), 120–123 (NKVD), 184–191 (GKPNVGKS), 231–235 (DTAGL), and 296–299 (NKWD) contribute to the GTP site. Residues 354–438 (MRVATGVLNE…ALKFITRERK (85 aa)) form the KH-like domain.

Belongs to the TRAFAC class TrmE-Era-EngA-EngB-Septin-like GTPase superfamily. EngA (Der) GTPase family. As to quaternary structure, associates with the 50S ribosomal subunit.

In terms of biological role, GTPase that plays an essential role in the late steps of ribosome biogenesis. This Agathobacter rectalis (strain ATCC 33656 / DSM 3377 / JCM 17463 / KCTC 5835 / VPI 0990) (Eubacterium rectale) protein is GTPase Der.